Reading from the N-terminus, the 100-residue chain is Urease subunit gamma (100 aa).

It belongs to the urease gamma subunit family. Heterotrimer of UreA (gamma), UreB (beta) and UreC (alpha) subunits. Three heterotrimers associate to form the active enzyme.

The protein resides in the cytoplasm. The catalysed reaction is urea + 2 H2O + H(+) = hydrogencarbonate + 2 NH4(+). Its pathway is nitrogen metabolism; urea degradation; CO(2) and NH(3) from urea (urease route): step 1/1. This Escherichia coli protein is Urease subunit gamma.